We begin with the raw amino-acid sequence, 168 residues long: MKMVKSIAAGLTAAAAIGAAAAGVTSIMAGGPVVYQMQPVVFGAPLPLDPASAPDVPTAAQLTSLLNSLADPNVSFANKGSLVEGGIGGTEARIADHKLKKAAEHGDLPLSFSVTNIQPAAAGSATADVSVSGPKLSSPVTRNVTFVNQGGWMLSRASAMELLQAAGN.

A signal peptide spans 1-22 (MKMVKSIAAGLTAAAAIGAAAA). A propeptide spanning residues 23 to 48 (GVTSIMAGGPVVYQMQPVVFGAPLPL) is cleaved from the precursor.

This sequence belongs to the MTB12 family.

The protein resides in the secreted. Functionally, may play a role in the development of protective immune responses. The polypeptide is Low molecular weight antigen MTB12 (mtb12) (Mycobacterium tuberculosis (strain CDC 1551 / Oshkosh)).